Reading from the N-terminus, the 459-residue chain is Nucleobindin-1 (459 aa).

Positions 1-25 (MPTSVPRGAPFLLLPPLLMLSAVLA) are cleaved as a signal peptide. Position 85 is a phosphoserine (Ser-85). A Phosphothreonine modification is found at Thr-147. Residues 149-217 (EARDLELLIQ…QQRRHREHPK (69 aa)) adopt a coiled-coil conformation. The DNA-binding element occupies 171–217 (HHEEFKRYEMLKEHERRRYLESLGEEQRKEAERKLQEQQRRHREHPK). Residues 192 to 209 (SLGEEQRKEAERKLQEQQ) are compositionally biased toward basic and acidic residues. The disordered stretch occupies residues 192 to 220 (SLGEEQRKEAERKLQEQQRRHREHPKVNV). The interval 227–320 (LKEVWEELDG…VTLEEFLAST (94 aa)) is binds to GNAI2 and GNAI3. 2 EF-hand domains span residues 239 to 274 (PNRFNPKTFFILHDINSDGVLDEQELEALFTKELEK) and 291 to 326 (ERLRMREHVMKNVDTNQDRLVTLEEFLASTQRKEFG). Ca(2+) is bound by residues Asp-252, Asn-254, Asp-256, Glu-263, Asp-304, Asn-306, Asp-308, and Glu-315. The short motif at 302-332 (NVDTNQDRLVTLEEFLASTQRKEFGETAEGW) is the GBA element. Residues 340-407 (AYTEEELKRF…RKQQQQEQSA (68 aa)) adopt a coiled-coil conformation. Position 368 is a phosphoserine (Ser-368). Residues 393–459 (LQMEQRKQQQ…VLPQLDSQHL (67 aa)) are disordered. Residues 433 to 445 (DQKDVPASEKKVP) show a composition bias toward basic and acidic residues. Ser-456 is modified (phosphoserine).

Belongs to the nucleobindin family. As to quaternary structure, interacts (via GBA motif) with guanine nucleotide-binding protein G(i) alpha subunits GNAI1, GNAI2 and GNAI3 with higher affinity for GNAI1 and GNAI3 than for GNAI2. Preferentially interacts with inactive rather than active GNAI3. Interaction with GNAI3 is inhibited when NUCB1 binds calcium, probably due to a conformational change which renders the GBA motif inaccessible. In terms of tissue distribution, minor constituent of the mineralized matrix of bone. Detected in calvaria, rib cartilage, liver, kidney, spleen, brain, lung, skeletal and heart muscle with highest expression in calvaria and approximately half the amount in kidney, liver and brain.

The protein resides in the golgi apparatus. It is found in the cis-Golgi network membrane. Its subcellular location is the cytoplasm. It localises to the secreted. Its function is as follows. Major calcium-binding protein of the Golgi which may have a role in calcium homeostasis. Acts as a non-receptor guanine nucleotide exchange factor which binds to and activates alpha subunits of guanine nucleotide-binding proteins (G proteins). In Rattus norvegicus (Rat), this protein is Nucleobindin-1 (Nucb1).